A 1122-amino-acid polypeptide reads, in one-letter code: Maestro heat-like repeat-containing protein family member 7 (1122 aa).

2 disordered regions span residues 1 to 144 (MALS…LSED) and 183 to 203 (SHTI…NTSL). The span at 33–65 (TTPRPTPDLTLAPLPAHGVALAPALHPALSPDP) shows a compositional bias: low complexity. Composition is skewed to polar residues over residues 75-95 (DISN…INTA), 120-136 (PVPS…SPEN), and 184-203 (HTIS…NTSL). 5 N-linked (GlcNAc...) asparagine glycosylation sites follow: N200, N210, N255, N267, and N296. The interval 246–265 (WNTGSKGSVNVTSNSQPRSG) is disordered. A Phosphoserine modification is found at S356. Residues 363–385 (FRSPPEGTSEDAKANESEKRDHD) are disordered. Over residues 372–385 (EDAKANESEKRDHD) the composition is skewed to basic and acidic residues. N-linked (GlcNAc...) asparagine glycans are attached at residues N541 and N546. 2 helical membrane-spanning segments follow: residues 548-568 (TLVT…LLLG) and 722-742 (LLPI…ALLM). HEAT repeat units lie at residues 913 to 950 (QELC…MEQV), 992 to 1029 (TKVQ…GQAK), 1035 to 1072 (SVYI…KLRM), and 1080 to 1117 (EQLT…FFLL).

It is found in the membrane. The protein is Maestro heat-like repeat-containing protein family member 7 (Mroh7) of Rattus norvegicus (Rat).